The primary structure comprises 253 residues: FGFR1 oncogene partner 2 (253 aa).

Positions 5-104 (IEKALADAKA…SALELIMSKY (100 aa)) form a coiled coil. A Phosphoserine modification is found at S141. Residues 160 to 223 (LERRHLEANQ…LREILQITRE (64 aa)) adopt a coiled-coil conformation. The disordered stretch occupies residues 231-253 (DDASESTSLSALVTNSDLSLRKS). Residues 235–253 (ESTSLSALVTNSDLSLRKS) are compositionally biased toward polar residues.

Belongs to the SIKE family. In terms of tissue distribution, expressed in bone marrow, spleen and thymus.

The protein localises to the cytoplasm. In terms of biological role, may be involved in wound healing pathway. The chain is FGFR1 oncogene partner 2 (FGFR1OP2) from Homo sapiens (Human).